Consider the following 213-residue polypeptide: Glycerol-3-phosphate acyltransferase (213 aa).

6 consecutive transmembrane segments (helical) span residues 2–22, 52–74, 81–100, 112–132, 143–163, and 164–184; these read ITIV…GLWI, AGMA…PIIF, PLIF…FAGF, VIFG…FGAL, VTAS…GFIL, and SNYD…IIIR.

This sequence belongs to the PlsY family. In terms of assembly, probably interacts with PlsX.

It localises to the cell membrane. It carries out the reaction an acyl phosphate + sn-glycerol 3-phosphate = a 1-acyl-sn-glycero-3-phosphate + phosphate. Its pathway is lipid metabolism; phospholipid metabolism. In terms of biological role, catalyzes the transfer of an acyl group from acyl-phosphate (acyl-PO(4)) to glycerol-3-phosphate (G3P) to form lysophosphatidic acid (LPA). This enzyme utilizes acyl-phosphate as fatty acyl donor, but not acyl-CoA or acyl-ACP. This Streptococcus pneumoniae (strain Hungary19A-6) protein is Glycerol-3-phosphate acyltransferase.